A 319-amino-acid chain; its full sequence is DNA-directed RNA polymerase subunit alpha (319 aa).

An alpha N-terminal domain (alpha-NTD) region spans residues 1–227 (MKEFIFPMKI…KHMNMLTNIS (227 aa)). The interval 242–319 (LMEKLTFSIE…NIGEQRSSEV (78 aa)) is alpha C-terminal domain (alpha-CTD).

It belongs to the RNA polymerase alpha chain family. As to quaternary structure, homodimer. The RNAP catalytic core consists of 2 alpha, 1 beta, 1 beta' and 1 omega subunit. When a sigma factor is associated with the core the holoenzyme is formed, which can initiate transcription.

It catalyses the reaction RNA(n) + a ribonucleoside 5'-triphosphate = RNA(n+1) + diphosphate. Functionally, DNA-dependent RNA polymerase catalyzes the transcription of DNA into RNA using the four ribonucleoside triphosphates as substrates. This chain is DNA-directed RNA polymerase subunit alpha, found in Hydrogenobaculum sp. (strain Y04AAS1).